We begin with the raw amino-acid sequence, 1647 residues long: Nucleoporin nup186 (1647 aa).

Belongs to the NUP186/NUP192/NUP205 family.

It is found in the cytoplasm. The protein resides in the nucleus. Functionally, functions as a component of the nuclear pore complex (NPC). NPC components, collectively referred to as nucleoporins (NUPs), can play the role of both NPC structural components and of docking or interaction partners for transiently associated nuclear transport factors. Active directional transport is assured by both, a Phe-Gly (FG) repeat affinity gradient for these transport factors across the NPC and a transport cofactor concentration gradient across the nuclear envelope. The polypeptide is Nucleoporin nup186 (nup186) (Schizosaccharomyces pombe (strain 972 / ATCC 24843) (Fission yeast)).